Here is a 344-residue protein sequence, read N- to C-terminus: 2,3,4,5-tetrahydropyridine-2,6-dicarboxylate N-succinyltransferase (344 aa).

Glu-205 contacts Mg(2+). Residue Glu-221 is the Acyl-anhydride intermediate of the active site. Succinyl-CoA contacts are provided by residues Arg-223, Gly-238, Ser-241, Ala-264, 279–280 (EA), Gly-287, Lys-304, and 317–320 (RRNS).

This sequence belongs to the type 2 tetrahydrodipicolinate N-succinyltransferase family. In terms of assembly, homotrimer.

It localises to the cytoplasm. It catalyses the reaction (S)-2,3,4,5-tetrahydrodipicolinate + succinyl-CoA + H2O = (S)-2-succinylamino-6-oxoheptanedioate + CoA. It participates in amino-acid biosynthesis; L-lysine biosynthesis via DAP pathway; LL-2,6-diaminopimelate from (S)-tetrahydrodipicolinate (succinylase route): step 1/3. In terms of biological role, catalyzes the conversion of the cyclic tetrahydrodipicolinate (THDP) into the acyclic N-succinyl-L-2-amino-6-oxopimelate using succinyl-CoA. The sequence is that of 2,3,4,5-tetrahydropyridine-2,6-dicarboxylate N-succinyltransferase from Pseudomonas putida (strain ATCC 47054 / DSM 6125 / CFBP 8728 / NCIMB 11950 / KT2440).